The following is a 419-amino-acid chain: UDP-N-acetylglucosamine 1-carboxyvinyltransferase (419 aa).

Phosphoenolpyruvate is bound at residue lysine 22–asparagine 23. Arginine 92 serves as a coordination point for UDP-N-acetyl-alpha-D-glucosamine. Catalysis depends on cysteine 116, which acts as the Proton donor. The residue at position 116 (cysteine 116) is a 2-(S-cysteinyl)pyruvic acid O-phosphothioketal. Residues arginine 121–leucine 125, aspartate 306, and isoleucine 328 contribute to the UDP-N-acetyl-alpha-D-glucosamine site.

This sequence belongs to the EPSP synthase family. MurA subfamily.

The protein localises to the cytoplasm. It catalyses the reaction phosphoenolpyruvate + UDP-N-acetyl-alpha-D-glucosamine = UDP-N-acetyl-3-O-(1-carboxyvinyl)-alpha-D-glucosamine + phosphate. It functions in the pathway cell wall biogenesis; peptidoglycan biosynthesis. Functionally, cell wall formation. Adds enolpyruvyl to UDP-N-acetylglucosamine. Target for the antibiotic fosfomycin. This Streptococcus pneumoniae (strain Hungary19A-6) protein is UDP-N-acetylglucosamine 1-carboxyvinyltransferase.